The following is a 344-amino-acid chain: Putative replication factor C small subunit L499 (344 aa).

Gly57–Thr64 is an ATP binding site.

Belongs to the activator 1 small subunits family. RfcS subfamily.

Functionally, part of the RFC clamp loader complex which loads the PCNA sliding clamp onto DNA. In Acanthamoeba polyphaga mimivirus (APMV), this protein is Putative replication factor C small subunit L499.